A 388-amino-acid chain; its full sequence is Succinate--CoA ligase [ADP-forming] subunit beta (388 aa).

One can recognise an ATP-grasp domain in the interval 9 to 243 (KQLFHRYGIP…ESQLAPLEVR (235 aa)). Residues lysine 45, 52-54 (GRG), glutamate 98, valine 101, and glutamate 106 each bind ATP. Mg(2+)-binding residues include asparagine 198 and aspartate 212. Substrate contacts are provided by residues asparagine 263 and 320 to 322 (GIM).

Belongs to the succinate/malate CoA ligase beta subunit family. Heterotetramer of two alpha and two beta subunits. It depends on Mg(2+) as a cofactor.

It catalyses the reaction succinate + ATP + CoA = succinyl-CoA + ADP + phosphate. It carries out the reaction GTP + succinate + CoA = succinyl-CoA + GDP + phosphate. The protein operates within carbohydrate metabolism; tricarboxylic acid cycle; succinate from succinyl-CoA (ligase route): step 1/1. Functionally, succinyl-CoA synthetase functions in the citric acid cycle (TCA), coupling the hydrolysis of succinyl-CoA to the synthesis of either ATP or GTP and thus represents the only step of substrate-level phosphorylation in the TCA. The beta subunit provides nucleotide specificity of the enzyme and binds the substrate succinate, while the binding sites for coenzyme A and phosphate are found in the alpha subunit. The sequence is that of Succinate--CoA ligase [ADP-forming] subunit beta from Syntrophotalea carbinolica (strain DSM 2380 / NBRC 103641 / GraBd1) (Pelobacter carbinolicus).